Here is a 254-residue protein sequence, read N- to C-terminus: Type II restriction enzyme HpaI (254 aa).

The catalysed reaction is Endonucleolytic cleavage of DNA to give specific double-stranded fragments with terminal 5'-phosphates.. Its function is as follows. A P subtype restriction enzyme that recognizes the double-stranded sequence 5'-GTTAAC-3' and cleaves after T-3. The protein is Type II restriction enzyme HpaI (hpaIR) of Haemophilus parainfluenzae.